The following is a 294-amino-acid chain: N-acetylmuramic acid 6-phosphate etherase (294 aa).

The 164-residue stretch at 56 to 219 folds into the SIS domain; it reads TSYSLRNGGR…STLSMVSVGK (164 aa). Residue Glu-84 is the Proton donor of the active site. Glu-115 is a catalytic residue.

This sequence belongs to the GCKR-like family. MurNAc-6-P etherase subfamily. In terms of assembly, homodimer.

The catalysed reaction is N-acetyl-D-muramate 6-phosphate + H2O = N-acetyl-D-glucosamine 6-phosphate + (R)-lactate. It participates in amino-sugar metabolism; 1,6-anhydro-N-acetylmuramate degradation. It functions in the pathway amino-sugar metabolism; N-acetylmuramate degradation. Its pathway is cell wall biogenesis; peptidoglycan recycling. Functionally, specifically catalyzes the cleavage of the D-lactyl ether substituent of MurNAc 6-phosphate, producing GlcNAc 6-phosphate and D-lactate. Together with AnmK, is also required for the utilization of anhydro-N-acetylmuramic acid (anhMurNAc) either imported from the medium or derived from its own cell wall murein, and thus plays a role in cell wall recycling. The protein is N-acetylmuramic acid 6-phosphate etherase of Francisella tularensis subsp. holarctica (strain LVS).